Here is a 72-residue protein sequence, read N- to C-terminus: Cytotoxin 9 (72 aa).

A signal peptide spans 1–12 (VVTIVCLDLGYT). 4 disulfides stabilise this stretch: Cys15–Cys33, Cys26–Cys50, Cys54–Cys65, and Cys66–Cys71.

Belongs to the three-finger toxin family. Short-chain subfamily. Type IA cytotoxin sub-subfamily. Monomer in solution; Homodimer and oligomer in the presence of negatively charged lipids forming a pore with a size ranging between 20 and 30 Angstroms. In terms of tissue distribution, expressed by the venom gland.

The protein localises to the secreted. Shows cytolytic activity on many different cells by forming a pore in lipid membranes. In vivo, increases heart rate or kills the animal by cardiac arrest. In addition, it binds to heparin with high affinity, interacts with Kv channel-interacting protein 1 (KCNIP1) in a calcium-independent manner, and binds to integrin alpha-V/beta-3 (ITGAV/ITGB3) with moderate affinity. Preferentially binds acidic phospholipids like phosphatidylserine, phosphatidic acid and phosphatidyl glycerol. Has hemolytic activity towards human erythrocytes (EC(50)=0.171 uM) and cytolytic activity towards various cell lines. This chain is Cytotoxin 9, found in Naja naja (Indian cobra).